Here is a 463-residue protein sequence, read N- to C-terminus: Autophagy-related protein 36 (463 aa).

The segment at 5-45 adopts an RING-type; atypical zinc-finger fold; sequence CSICLEVLVDKEAFTEPCLHYYHNECIKEWTKRANTCPKCR. The PHD-type zinc finger occupies 85 to 131; the sequence is TNLCALCEDPSTSLIYCESCGGSFHFNCIGIGDELDSEWCCPLCGMF. The span at 229-242 shows a compositional bias: polar residues; the sequence is TQNSQSSEFSTENN. Positions 229–281 are disordered; sequence TQNSQSSEFSTENNVVPLKNTHELGRKLKKPRRASGIKKNVVERSSSHQSTQI. Residues 255–264 are compositionally biased toward basic residues; it reads KLKKPRRASG.

Interacts with ATG28.

Micropexophagy-specific protein required for efficient micropexophagic apparatus (MIPA) formation but not for general autophagy. The protein is Autophagy-related protein 36 (ATG35) of Komagataella phaffii (strain GS115 / ATCC 20864) (Yeast).